The primary structure comprises 369 residues: Histidinol-phosphate aminotransferase 2 (369 aa).

Residue lysine 227 is modified to N6-(pyridoxal phosphate)lysine.

This sequence belongs to the class-II pyridoxal-phosphate-dependent aminotransferase family. Histidinol-phosphate aminotransferase subfamily. As to quaternary structure, homodimer. Requires pyridoxal 5'-phosphate as cofactor.

The enzyme catalyses L-histidinol phosphate + 2-oxoglutarate = 3-(imidazol-4-yl)-2-oxopropyl phosphate + L-glutamate. It participates in amino-acid biosynthesis; L-histidine biosynthesis; L-histidine from 5-phospho-alpha-D-ribose 1-diphosphate: step 7/9. This chain is Histidinol-phosphate aminotransferase 2 (hisC2), found in Mesorhizobium japonicum (strain LMG 29417 / CECT 9101 / MAFF 303099) (Mesorhizobium loti (strain MAFF 303099)).